Reading from the N-terminus, the 143-residue chain is Large ribosomal subunit protein uL16 (143 aa).

Basic residues predominate over residues 1–17 (MLQPKRTKFRKAHKGRI). A disordered region spans residues 1 to 20 (MLQPKRTKFRKAHKGRIHGN).

This sequence belongs to the universal ribosomal protein uL16 family. In terms of assembly, part of the 50S ribosomal subunit.

Its function is as follows. Binds 23S rRNA and is also seen to make contacts with the A and possibly P site tRNAs. This chain is Large ribosomal subunit protein uL16, found in Zymomonas mobilis subsp. mobilis (strain ATCC 31821 / ZM4 / CP4).